Consider the following 319-residue polypeptide: Curved DNA-binding protein (319 aa).

A J domain is found at 5 to 69 (DYYKILGVEP…QKRAEFDEIR (65 aa)).

It is found in the cytoplasm. It localises to the nucleoid. Functionally, DNA-binding protein that preferentially recognizes a curved DNA sequence. It is probably a functional analog of DnaJ; displays overlapping activities with DnaJ, but functions under different conditions, probably acting as a molecular chaperone in an adaptive response to environmental stresses other than heat shock. Lacks autonomous chaperone activity; binds native substrates and targets them for recognition by DnaK. Its activity is inhibited by the binding of CbpM. The protein is Curved DNA-binding protein of Pseudomonas putida (strain ATCC 700007 / DSM 6899 / JCM 31910 / BCRC 17059 / LMG 24140 / F1).